The chain runs to 375 residues: Succinyl-diaminopimelate desuccinylase (375 aa).

H75 contacts Zn(2+). D77 is an active-site residue. D106 lines the Zn(2+) pocket. Catalysis depends on E136, which acts as the Proton acceptor. Zn(2+)-binding residues include E137, E165, and H348.

It belongs to the peptidase M20A family. DapE subfamily. As to quaternary structure, homodimer. The cofactor is Zn(2+). Requires Co(2+) as cofactor.

It carries out the reaction N-succinyl-(2S,6S)-2,6-diaminopimelate + H2O = (2S,6S)-2,6-diaminopimelate + succinate. Its pathway is amino-acid biosynthesis; L-lysine biosynthesis via DAP pathway; LL-2,6-diaminopimelate from (S)-tetrahydrodipicolinate (succinylase route): step 3/3. Its function is as follows. Catalyzes the hydrolysis of N-succinyl-L,L-diaminopimelic acid (SDAP), forming succinate and LL-2,6-diaminopimelate (DAP), an intermediate involved in the bacterial biosynthesis of lysine and meso-diaminopimelic acid, an essential component of bacterial cell walls. The polypeptide is Succinyl-diaminopimelate desuccinylase (Novosphingobium aromaticivorans (strain ATCC 700278 / DSM 12444 / CCUG 56034 / CIP 105152 / NBRC 16084 / F199)).